A 217-amino-acid chain; its full sequence is Small ribosomal subunit protein uS3 (217 aa).

In terms of domain architecture, KH type-2 spans 40 to 110; it reads IRDLINKGFN…EVYINIHEVR (71 aa).

This sequence belongs to the universal ribosomal protein uS3 family. Part of the 30S ribosomal subunit. Forms a tight complex with proteins S10 and S14.

Its function is as follows. Binds the lower part of the 30S subunit head. Binds mRNA in the 70S ribosome, positioning it for translation. This Rickettsia akari (strain Hartford) protein is Small ribosomal subunit protein uS3.